An 85-amino-acid chain; its full sequence is RNA-binding protein Hfq (85 aa).

Positions 9 to 68 constitute a Sm domain; sequence DPFLNALRRERIPVSIYLVNGIKLQGQIESFDQFVILLKNTVNQMVYKHAISTVVPARPV. The segment at 66 to 85 is disordered; it reads RPVNHHHASDRPATLEKTEE. A compositionally biased stretch (basic and acidic residues) spans 72–85; sequence HASDRPATLEKTEE.

It belongs to the Hfq family. As to quaternary structure, homohexamer.

Functionally, RNA chaperone that binds small regulatory RNA (sRNAs) and mRNAs to facilitate mRNA translational regulation in response to envelope stress, environmental stress and changes in metabolite concentrations. Also binds with high specificity to tRNAs. The sequence is that of RNA-binding protein Hfq from Photobacterium profundum (strain SS9).